Here is a 491-residue protein sequence, read N- to C-terminus: Stromelysin-3 (491 aa).

An N-terminal signal peptide occupies residues 1 to 35; that stretch reads MARAACLLRAISRALLLPLPLLLLLLLLLPPQLMA. The propeptide at 36 to 101 is activation peptide; that stretch reads RARPPENHRH…VLNARNRQKR (66 aa). Residues 82 to 89 carry the Cysteine switch motif; sequence LRCGVPDP. Residues Cys-84, His-168, and Asp-170 each coordinate Zn(2+). Ca(2+) contacts are provided by Asp-175, Gly-176, Gly-178, and Ile-180. Positions 183, 196, and 218 each coordinate Zn(2+). Residue Glu-219 is part of the active site. Positions 222 and 228 each coordinate Zn(2+). Residues 260 to 279 form a disordered region; sequence YGRPQLTPTSPTPTLSSQAG. Residues 263-277 are compositionally biased toward low complexity; it reads PQLTPTSPTPTLSSQ. Residues Cys-297 and Cys-483 are joined by a disulfide bond. 4 Hemopexin repeats span residues 298–342, 343–385, 387–435, and 436–483; these read ETSF…WQGL, PSPV…KLGL, GSPV…WRGV, and PSEI…FFDC.

This sequence belongs to the peptidase M10A family. It depends on Ca(2+) as a cofactor. Zn(2+) is required as a cofactor. The precursor is cleaved by a furin endopeptidase. As to expression, highly expressed in ovary and uterus.

Its subcellular location is the secreted. It is found in the extracellular space. The protein localises to the extracellular matrix. Functionally, may play an important role in the progression of epithelial malignancies. The polypeptide is Stromelysin-3 (Mmp11) (Rattus norvegicus (Rat)).